The primary structure comprises 384 residues: 8-amino-7-oxononanoate synthase (384 aa).

Residue R21 coordinates substrate. Residue 108 to 109 (GF) participates in pyridoxal 5'-phosphate binding. H133 lines the substrate pocket. Residues S179, H207, and T233 each coordinate pyridoxal 5'-phosphate. Position 236 is an N6-(pyridoxal phosphate)lysine (K236). Residue T352 coordinates substrate.

Belongs to the class-II pyridoxal-phosphate-dependent aminotransferase family. BioF subfamily. In terms of assembly, homodimer. The cofactor is pyridoxal 5'-phosphate.

It carries out the reaction 6-carboxyhexanoyl-[ACP] + L-alanine + H(+) = (8S)-8-amino-7-oxononanoate + holo-[ACP] + CO2. It participates in cofactor biosynthesis; biotin biosynthesis. Catalyzes the decarboxylative condensation of pimeloyl-[acyl-carrier protein] and L-alanine to produce 8-amino-7-oxononanoate (AON), [acyl-carrier protein], and carbon dioxide. The polypeptide is 8-amino-7-oxononanoate synthase (Citrobacter koseri (strain ATCC BAA-895 / CDC 4225-83 / SGSC4696)).